The following is a 258-amino-acid chain: Tryptophan synthase alpha chain (258 aa).

Residues Glu-47 and Asp-58 each act as proton acceptor in the active site.

This sequence belongs to the TrpA family. Tetramer of two alpha and two beta chains.

It carries out the reaction (1S,2R)-1-C-(indol-3-yl)glycerol 3-phosphate + L-serine = D-glyceraldehyde 3-phosphate + L-tryptophan + H2O. Its pathway is amino-acid biosynthesis; L-tryptophan biosynthesis; L-tryptophan from chorismate: step 5/5. Functionally, the alpha subunit is responsible for the aldol cleavage of indoleglycerol phosphate to indole and glyceraldehyde 3-phosphate. This chain is Tryptophan synthase alpha chain, found in Bacillus cereus (strain AH820).